A 189-amino-acid polypeptide reads, in one-letter code: UPF0232 protein MLBr00004 (189 aa).

The disordered stretch occupies residues 59-78 (TDRRRNWSGPGPDVRDPQPL).

Belongs to the UPF0232 family.

The polypeptide is UPF0232 protein MLBr00004 (Mycobacterium leprae (strain Br4923)).